The chain runs to 275 residues: Glutamate racemase (275 aa).

Substrate-binding positions include 12–13 (DS) and 44–45 (YG). Cys-75 (proton donor/acceptor) is an active-site residue. 76-77 (NT) serves as a coordination point for substrate. Cys-185 (proton donor/acceptor) is an active-site residue. Residue 186-187 (TH) coordinates substrate.

This sequence belongs to the aspartate/glutamate racemases family.

It catalyses the reaction L-glutamate = D-glutamate. Its pathway is cell wall biogenesis; peptidoglycan biosynthesis. Functionally, provides the (R)-glutamate required for cell wall biosynthesis. The polypeptide is Glutamate racemase (Mycobacterium avium (strain 104)).